We begin with the raw amino-acid sequence, 285 residues long: MFNWVKTAMLMAAITALFIVIGGMIGGSRGMTIALVIALGMNFFSYWFSDKMVLRMYNAQEVDETSAPQFYRMVRELSTRAGLPMPRVYLINEDAPNAFATGRNPEHAAVAATTGILRVLSEREMRGVMAHELSHVKHRDILISTISATMAGAISALANFAMFFGSRDENGRSTNPIAGIAVALLAPIAGALIQMAISRAREFEADRGGAQISGDPQALASALDKIHRYASGIPFPTAEQHPATAQMMIMNPLSGGGIANLFSTHPATEERIARLMEMARTGRFE.

2 consecutive transmembrane segments (helical) span residues 7 to 27 and 30 to 50; these read TAML…MIGG and GMTI…WFSD. Residue histidine 131 participates in Zn(2+) binding. Residue glutamate 132 is part of the active site. Residue histidine 135 coordinates Zn(2+). 2 helical membrane-spanning segments follow: residues 141–161 and 177–197; these read ILIS…ANFA and IAGI…QMAI. Residue glutamate 202 participates in Zn(2+) binding.

The protein belongs to the peptidase M48B family. It depends on Zn(2+) as a cofactor.

The protein localises to the cell inner membrane. In Paraburkholderia phytofirmans (strain DSM 17436 / LMG 22146 / PsJN) (Burkholderia phytofirmans), this protein is Protease HtpX homolog.